The sequence spans 461 residues: ATP synthase subunit beta 2 (461 aa).

151-158 is an ATP binding site; that stretch reads GGAGVGKT.

This sequence belongs to the ATPase alpha/beta chains family. In terms of assembly, F-type ATPases have 2 components, CF(1) - the catalytic core - and CF(0) - the membrane proton channel. CF(1) has five subunits: alpha(3), beta(3), gamma(1), delta(1), epsilon(1). CF(0) has three main subunits: a(1), b(2) and c(9-12). The alpha and beta chains form an alternating ring which encloses part of the gamma chain. CF(1) is attached to CF(0) by a central stalk formed by the gamma and epsilon chains, while a peripheral stalk is formed by the delta and b chains.

The protein localises to the cell inner membrane. The catalysed reaction is ATP + H2O + 4 H(+)(in) = ADP + phosphate + 5 H(+)(out). Produces ATP from ADP in the presence of a proton gradient across the membrane. The catalytic sites are hosted primarily by the beta subunits. This Vibrio campbellii (strain ATCC BAA-1116) protein is ATP synthase subunit beta 2.